We begin with the raw amino-acid sequence, 343 residues long: 3-dehydroquinate synthase (343 aa).

NAD(+)-binding positions include Ser-61 to Lys-66, Gly-95 to Asp-99, Thr-119 to Thr-120, Lys-132, Lys-141, and Phe-159 to Thr-162. Residues Glu-174, His-231, and His-248 each coordinate Zn(2+).

Belongs to the sugar phosphate cyclases superfamily. Dehydroquinate synthase family. The cofactor is Co(2+). Zn(2+) is required as a cofactor. Requires NAD(+) as cofactor.

It localises to the cytoplasm. It catalyses the reaction 7-phospho-2-dehydro-3-deoxy-D-arabino-heptonate = 3-dehydroquinate + phosphate. Its pathway is metabolic intermediate biosynthesis; chorismate biosynthesis; chorismate from D-erythrose 4-phosphate and phosphoenolpyruvate: step 2/7. In terms of biological role, catalyzes the conversion of 3-deoxy-D-arabino-heptulosonate 7-phosphate (DAHP) to dehydroquinate (DHQ). This Helicobacter pylori (strain HPAG1) protein is 3-dehydroquinate synthase.